The chain runs to 322 residues: MSSLEQLKATGTVVVSDTGDFESIAKYKPQDATTNPSLILAASKKPQYAALVDAAVDYAKAKGGSINSQIEIAFDRLLIEFGTKILAIVPGRVSTEVDARYSFDTQTTIEKARHLIKLYEAEGIGRERVLIKIASTYEGIQAAKQLEEEGIHCNLTLLFSFVQAVACAEANVTLISPFVGRILDFYKAKNNRDYTAQEDPGVVSVSNIFNYYKKFGYKTIVMGASFRNVGEIKELAGVDFLTISPALLEQLNNSTDAVPKKLDASKASSLNLEKVSYLTDEPKFRFDFNNDEMAVVKLSTGIAAFAKDADTLRTILKAKLEA.

Residue K132 is the Schiff-base intermediate with substrate of the active site. 2 positions are modified to phosphoserine: S268 and S269.

Belongs to the transaldolase family. Type 1 subfamily. As to quaternary structure, homodimer.

The enzyme catalyses D-sedoheptulose 7-phosphate + D-glyceraldehyde 3-phosphate = D-erythrose 4-phosphate + beta-D-fructose 6-phosphate. It functions in the pathway carbohydrate degradation; pentose phosphate pathway; D-glyceraldehyde 3-phosphate and beta-D-fructose 6-phosphate from D-ribose 5-phosphate and D-xylulose 5-phosphate (non-oxidative stage): step 2/3. Functionally, transaldolase is important for the balance of metabolites in the pentose-phosphate pathway. This chain is Transaldolase (tal1), found in Schizosaccharomyces pombe (strain 972 / ATCC 24843) (Fission yeast).